The sequence spans 355 residues: Erythronate-4-phosphate dehydrogenase (355 aa).

2 residues coordinate substrate: serine 45 and threonine 66. NAD(+) is bound at residue aspartate 146. Arginine 206 is an active-site residue. Aspartate 229 contacts NAD(+). Residue glutamate 234 is part of the active site. Residue histidine 251 is the Proton donor of the active site. Glycine 254 serves as a coordination point for NAD(+). Tyrosine 255 is a binding site for substrate.

Belongs to the D-isomer specific 2-hydroxyacid dehydrogenase family. PdxB subfamily. In terms of assembly, homodimer.

It localises to the cytoplasm. The catalysed reaction is 4-phospho-D-erythronate + NAD(+) = (R)-3-hydroxy-2-oxo-4-phosphooxybutanoate + NADH + H(+). The protein operates within cofactor biosynthesis; pyridoxine 5'-phosphate biosynthesis; pyridoxine 5'-phosphate from D-erythrose 4-phosphate: step 2/5. Functionally, catalyzes the oxidation of erythronate-4-phosphate to 3-hydroxy-2-oxo-4-phosphonooxybutanoate. The protein is Erythronate-4-phosphate dehydrogenase of Acinetobacter baumannii (strain ACICU).